Consider the following 503-residue polypeptide: UDP-N-acetylmuramoylalanine--D-glutamate ligase (503 aa).

129–135 (GTNGKTT) serves as a coordination point for ATP.

It belongs to the MurCDEF family.

The protein resides in the cytoplasm. The catalysed reaction is UDP-N-acetyl-alpha-D-muramoyl-L-alanine + D-glutamate + ATP = UDP-N-acetyl-alpha-D-muramoyl-L-alanyl-D-glutamate + ADP + phosphate + H(+). It functions in the pathway cell wall biogenesis; peptidoglycan biosynthesis. In terms of biological role, cell wall formation. Catalyzes the addition of glutamate to the nucleotide precursor UDP-N-acetylmuramoyl-L-alanine (UMA). This Burkholderia cenocepacia (strain HI2424) protein is UDP-N-acetylmuramoylalanine--D-glutamate ligase.